A 262-amino-acid chain; its full sequence is Proteasome subunit alpha (262 aa).

Residues 235–262 (LLPTTGESDAGDSGADGSPSGDSPDTSA) are disordered.

It belongs to the peptidase T1A family. As to quaternary structure, the 20S proteasome core is composed of 14 alpha and 14 beta subunits that assemble into four stacked heptameric rings, resulting in a barrel-shaped structure. The two inner rings, each composed of seven catalytic beta subunits, are sandwiched by two outer rings, each composed of seven alpha subunits. The catalytic chamber with the active sites is on the inside of the barrel. Has a gated structure, the ends of the cylinder being occluded by the N-termini of the alpha-subunits. Is capped by the proteasome-associated ATPase, ARC.

Its subcellular location is the cytoplasm. The protein operates within protein degradation; proteasomal Pup-dependent pathway. With respect to regulation, the formation of the proteasomal ATPase ARC-20S proteasome complex, likely via the docking of the C-termini of ARC into the intersubunit pockets in the alpha-rings, may trigger opening of the gate for substrate entry. Interconversion between the open-gate and close-gate conformations leads to a dynamic regulation of the 20S proteasome proteolysis activity. Functionally, component of the proteasome core, a large protease complex with broad specificity involved in protein degradation. The chain is Proteasome subunit alpha from Gordonia bronchialis (strain ATCC 25592 / DSM 43247 / BCRC 13721 / JCM 3198 / KCTC 3076 / NBRC 16047 / NCTC 10667) (Rhodococcus bronchialis).